The primary structure comprises 163 residues: Photosystem II extrinsic protein V (163 aa).

A signal peptide spans 1–26 (MFKKSSQLFSLVFFTIFSIFIGTASA). C63, C66, H67, and M130 together coordinate heme c.

It belongs to the cytochrome c family. PsbV subfamily. In terms of assembly, PSII is composed of 1 copy each of membrane proteins PsbA, PsbB, PsbC, PsbD, PsbE, PsbF, PsbH, PsbI, PsbJ, PsbK, PsbL, PsbM, PsbT, PsbY, PsbZ, Psb30/Ycf12, at least 3 peripheral proteins of the oxygen-evolving complex and a large number of cofactors. It forms dimeric complexes. Requires heme c as cofactor.

The protein localises to the plastid. Its subcellular location is the chloroplast thylakoid membrane. Functionally, one of the extrinsic, lumenal subunits of photosystem II (PSII). PSII is a light-driven water plastoquinone oxidoreductase, using light energy to abstract electrons from H(2)O, generating a proton gradient subsequently used for ATP formation. The extrinsic proteins stabilize the structure of photosystem II oxygen-evolving complex (OEC), the ion environment of oxygen evolution and protect the OEC against heat-induced inactivation. This is Photosystem II extrinsic protein V from Phaeodactylum tricornutum (strain CCAP 1055/1).